Reading from the N-terminus, the 130-residue chain is Ribosome-binding factor A (130 aa).

It belongs to the RbfA family. Monomer. Binds 30S ribosomal subunits, but not 50S ribosomal subunits or 70S ribosomes.

The protein localises to the cytoplasm. One of several proteins that assist in the late maturation steps of the functional core of the 30S ribosomal subunit. Associates with free 30S ribosomal subunits (but not with 30S subunits that are part of 70S ribosomes or polysomes). Required for efficient processing of 16S rRNA. May interact with the 5'-terminal helix region of 16S rRNA. This Methylibium petroleiphilum (strain ATCC BAA-1232 / LMG 22953 / PM1) protein is Ribosome-binding factor A.